A 392-amino-acid chain; its full sequence is p21-activated protein kinase-interacting protein 1 (392 aa).

6 WD repeats span residues 33 to 72 (VADFTHHAHTASLSAVAVNSRFVVTGSKDETIHIYDMKKK), 73 to 113 (IEHG…AKKW), 114 to 155 (ECLK…LVEG), 156 to 195 (RSAFIKNIKQNAHIVEWSPRGEQYVVIIQNKIDIYQLDTA), 196 to 235 (SISGTITNEKRISSVKFLSESVLAVAGDEEVIRFFDCDSL), and 236 to 275 (VCLCEFKAHENRVKDMFSFEIPEHHVIVSASSDGFIKMWK). Residues 312–392 (SLPPAAEPSP…RKKKKIKTMQ (81 aa)) form a disordered region. Ser320 is modified (phosphoserine). Residues 325 to 345 (EQSKIGKKEPGDTVHKEEKRS) are compositionally biased toward basic and acidic residues. Over residues 381-392 (KKRKKKKIKTMQ) the composition is skewed to basic residues.

In terms of assembly, interacts with PAK1. In terms of tissue distribution, expressed in brain, colon, heart, kidney, liver, lung, muscle, peripheral blood leukocytes, placenta, small intestine, spleen and thymus.

It localises to the nucleus. Its subcellular location is the nucleolus. Negatively regulates the PAK1 kinase. PAK1 is a member of the PAK kinase family, which has been shown to play a positive role in the regulation of signaling pathways involving MAPK8 and RELA. PAK1 exists as an inactive homodimer, which is activated by binding of small GTPases such as CDC42 to an N-terminal regulatory domain. PAK1IP1 also binds to the N-terminus of PAK1, and inhibits the specific activation of PAK1 by CDC42. May be involved in ribosomal large subunit assembly. This chain is p21-activated protein kinase-interacting protein 1 (PAK1IP1), found in Homo sapiens (Human).